A 404-amino-acid chain; its full sequence is Transcription factor sem-2 (404 aa).

Residues 93–161 (IKRPMNAFMV…CHMQEYPDYK (69 aa)) constitute a DNA-binding region (HMG box). Disordered stretches follow at residues 158-218 (PDYK…QFQN) and 321-359 (HTSP…NSAG). Over residues 177 to 199 (QQPAQPQAPQQQQAPPRGASPQA) the composition is skewed to low complexity. Composition is skewed to polar residues over residues 207-218 (TDQQSETQQFQN) and 347-359 (ASEQ…NSAG).

It is found in the nucleus. Functionally, probable transcription factor required for embryogenesis, vulval development and cell fate specification of the postembryonic mesoderm (also known as the M lineage). Specifically, required for the specification of sex myoblast cells and their development into the muscles that are necessary for egg-laying. In addition, may be involved in RME GABAergic motor neuron progenitor cell fate specification. The sequence is that of Transcription factor sem-2 from Caenorhabditis elegans.